We begin with the raw amino-acid sequence, 353 residues long: Photosystem II D2 protein (353 aa).

Thr-2 carries the post-translational modification N-acetylthreonine. Position 2 is a phosphothreonine (Thr-2). The chain crosses the membrane as a helical span at residues 41–61 (CAYFALGGWFTGTTFVTSWYT). Chlorophyll a is bound at residue His-118. Residues 125 to 141 (GFMLRQFELARSVQLRP) traverse the membrane as a helical segment. 2 residues coordinate pheophytin a: Gln-130 and Asn-143. Residues 153-166 (VFVSVFLIYPLGQS) traverse the membrane as a helical segment. His-198 is a chlorophyll a binding site. A helical membrane pass occupies residues 208–228 (AALLCAIHGATVENTLFEDGD). Residues His-215 and Phe-262 each coordinate a plastoquinone. His-215 contacts Fe cation. A Fe cation-binding site is contributed by His-269. Residues 279 to 295 (GLWMSALGVVGLALNLR) form a helical membrane-spanning segment.

It belongs to the reaction center PufL/M/PsbA/D family. PSII is composed of 1 copy each of membrane proteins PsbA, PsbB, PsbC, PsbD, PsbE, PsbF, PsbH, PsbI, PsbJ, PsbK, PsbL, PsbM, PsbT, PsbX, PsbY, PsbZ, Psb30/Ycf12, at least 3 peripheral proteins of the oxygen-evolving complex and a large number of cofactors. It forms dimeric complexes. The cofactor is The D1/D2 heterodimer binds P680, chlorophylls that are the primary electron donor of PSII, and subsequent electron acceptors. It shares a non-heme iron and each subunit binds pheophytin, quinone, additional chlorophylls, carotenoids and lipids. There is also a Cl(-1) ion associated with D1 and D2, which is required for oxygen evolution. The PSII complex binds additional chlorophylls, carotenoids and specific lipids..

It is found in the plastid. The protein localises to the chloroplast thylakoid membrane. It catalyses the reaction 2 a plastoquinone + 4 hnu + 2 H2O = 2 a plastoquinol + O2. Photosystem II (PSII) is a light-driven water:plastoquinone oxidoreductase that uses light energy to abstract electrons from H(2)O, generating O(2) and a proton gradient subsequently used for ATP formation. It consists of a core antenna complex that captures photons, and an electron transfer chain that converts photonic excitation into a charge separation. The D1/D2 (PsbA/PsbD) reaction center heterodimer binds P680, the primary electron donor of PSII as well as several subsequent electron acceptors. D2 is needed for assembly of a stable PSII complex. The sequence is that of Photosystem II D2 protein from Populus deltoides (Eastern poplar).